The primary structure comprises 525 residues: GMP synthase [glutamine-hydrolyzing] (525 aa).

In terms of domain architecture, Glutamine amidotransferase type-1 spans 9–207; it reads RILILDFGSQ…VRDICQCEAL (199 aa). Catalysis depends on C86, which acts as the Nucleophile. Catalysis depends on residues H181 and E183. Residues 208 to 400 enclose the GMPS ATP-PPase domain; the sequence is WTPAKIIDDA…LGLPYDMLYR (193 aa). 235–241 is a binding site for ATP; it reads SGGVDSS.

Homodimer.

It carries out the reaction XMP + L-glutamine + ATP + H2O = GMP + L-glutamate + AMP + diphosphate + 2 H(+). Its pathway is purine metabolism; GMP biosynthesis; GMP from XMP (L-Gln route): step 1/1. Its function is as follows. Catalyzes the synthesis of GMP from XMP. The polypeptide is GMP synthase [glutamine-hydrolyzing] (Salmonella newport (strain SL254)).